A 215-amino-acid polypeptide reads, in one-letter code: MNAPALSPARRTKKLPPLRVGIGGPVGSGKTTLLEMLCKAMRERYDLVAITNDIYTKEDQRLLTVAGALPEERIMGVETGGCPHTAIREDASINLEAVDRMLSRFPDADIVFIESGGDNLAATFSPELSDLTIYVIDVAGGEKIPRKGGPGITKSDLLVINKTDLAPLVGANLDVMASDTKKMRGERPYVMTNLKALDGVADVVAFIEKKGLLTV.

Residue 24–31 (GPVGSGKT) participates in GTP binding.

Belongs to the SIMIBI class G3E GTPase family. UreG subfamily. In terms of assembly, homodimer. UreD, UreF and UreG form a complex that acts as a GTP-hydrolysis-dependent molecular chaperone, activating the urease apoprotein by helping to assemble the nickel containing metallocenter of UreC. The UreE protein probably delivers the nickel.

It localises to the cytoplasm. Facilitates the functional incorporation of the urease nickel metallocenter. This process requires GTP hydrolysis, probably effectuated by UreG. The sequence is that of Urease accessory protein UreG from Burkholderia ambifaria (strain ATCC BAA-244 / DSM 16087 / CCUG 44356 / LMG 19182 / AMMD) (Burkholderia cepacia (strain AMMD)).